We begin with the raw amino-acid sequence, 27 residues long: Omega-conotoxin RVIA (27 aa).

3 cysteine pairs are disulfide-bonded: Cys-1/Cys-16, Cys-8/Cys-19, and Cys-15/Cys-26. A 4-hydroxyproline mark is found at Pro-4 and Pro-7.

Belongs to the conotoxin O1 superfamily. Expressed by the venom duct.

Its subcellular location is the secreted. Its function is as follows. Omega-conotoxins act at presynaptic membranes, they bind and block voltage-gated calcium channels (Cav). This Conus radiatus (Rayed cone) protein is Omega-conotoxin RVIA.